The primary structure comprises 405 residues: Scramblase ANY1 (405 aa).

At 1–51 (MSTTGPLDATLIRDVAVATATKASYDMSDTLYSYLPKVDQFYIPEWLTMQF) the chain is on the cytoplasmic side. Residues 52–72 (IANNLISFTPLFSYGTTIISI) form a helical membrane-spanning segment. The Lumenal segment spans residues 73-76 (EKCK). The chain crosses the membrane as a helical span at residues 77 to 97 (TALGFSIDICATMLIASILRI). Topologically, residues 98 to 103 (SYYLIT) are cytoplasmic. A helical membrane pass occupies residues 104–124 (PYEITLLRQSLVMIFIQLILL). Over 125 to 177 (RTSLKYRPDEYKYQNLTDVESLSHLIHDIWFEFFSCINRPKFLSEDWKNLIKS) the chain is Lumenal. The helical transmembrane segment at 178-198 (LSFTNLLKFSFKIFLAFFYKI) threads the bilayer. The Cytoplasmic segment spans residues 199–223 (LKFFDPNFKRIGAFWQWDDDKNFWR). A helical membrane pass occupies residues 224 to 244 (FLALFATVQILVTFFISNILN). At 245 to 254 (WDSLAQGLGS) the chain is on the lumenal side. A PQ-loop domain is found at 252-309 (LGSIIGSLGLLVESLLPLPQIAILYKLKSVQGFKLILLVSWLCGDTLKITYLIFGAKN). A helical membrane pass occupies residues 255 to 275 (IIGSLGLLVESLLPLPQIAIL). Residues 276 to 283 (YKLKSVQG) are Cytoplasmic-facing. A helical transmembrane segment spans residues 284 to 306 (FKLILLVSWLCGDTLKITYLIFG). Residues 307-312 (AKNISA) are Lumenal-facing. Residues 313-335 (LFVIFALFQMSLDFYIGGQYIYY) traverse the membrane as a helical segment. At 336–405 (RYYYPKLRHQ…GKSQAQAVTL (70 aa)) the chain is on the cytoplasmic side. Residues 379–405 (LKQDSNDTSDSPQDDQVGKSQAQAVTL) are disordered. Positions 396 to 405 (GKSQAQAVTL) are enriched in polar residues.

As to quaternary structure, interacts with NEO1.

The protein localises to the golgi apparatus membrane. The protein resides in the late endosome membrane. Phospholipid scramblase that transports phosphatidylserine (PS) and phosphatidylethalonamine (PE) bidirectionally from one leaflet to the other of the phospholipid bilayer to at least partially collapse the membrane asymmetry established by NEO1 and other flippases. The PS scramblase activity has been disputed. Functions in the trafficking pathway from endosomes to the trans-Golgi network (TGN). The chain is Scramblase ANY1 from Saccharomyces cerevisiae (strain ATCC 204508 / S288c) (Baker's yeast).